The following is a 103-amino-acid chain: ATP synthase subunit H, mitochondrial (103 aa).

The transit peptide at 1 to 26 directs the protein to the mitochondrion; sequence MSRILKSLSRSYSTTSPRLYVDVVQG.

This sequence belongs to the ATPase h subunit family. As to quaternary structure, F-type ATPases have 2 components, CF(1) - the catalytic core - and CF(0) - the membrane proton channel.

It localises to the mitochondrion. Its subcellular location is the mitochondrion inner membrane. Mitochondrial membrane ATP synthase (F(1)F(0) ATP synthase or Complex V) produces ATP from ADP in the presence of a proton gradient across the membrane which is generated by electron transport complexes of the respiratory chain. F-type ATPases consist of two structural domains, F(1) - containing the extramembraneous catalytic core and F(0) - containing the membrane proton channel, linked together by a central stalk and a peripheral stalk. During catalysis, ATP synthesis in the catalytic domain of F(1) is coupled via a rotary mechanism of the central stalk subunits to proton translocation. Part of the complex F(0) domain. Minor subunit located with subunit a in the membrane. This is ATP synthase subunit H, mitochondrial (atp14) from Schizosaccharomyces pombe (strain 972 / ATCC 24843) (Fission yeast).